The sequence spans 142 residues: HTH-type transcriptional regulator MntR (142 aa).

The HTH dtxR-type domain maps to 1-63 (MTTPSMEDYI…YEKYRGLVLT (63 aa)). Cd(2+) contacts are provided by aspartate 8, glutamate 11, histidine 77, glutamate 99, glutamate 102, and histidine 103. Mn(2+) is bound by residues aspartate 8, glutamate 11, histidine 77, glutamate 99, glutamate 102, and histidine 103.

Belongs to the DtxR/MntR family. Homodimer.

It is found in the cytoplasm. DNA binding is strongly activated by Mn(2+) and Cd(2+), but it is poorly activated by non-cognate metal cations, including Co(2+), Fe(2+), Ni(2+), Ca(2+) and Zn(2+). In the strict absence of divalent transition metal ions, MntR has a low affinity for DNA. In terms of biological role, central regulator of manganese homeostasis that regulates the expression of both manganese uptake and efflux systems. In the presence of high levels of manganese, it mediates repression of the manganese uptake systems MntH and MntABCD and activation of the efflux systems MneP and MneS. Binds with high affinity to the regulatory regions of its target genes. The manganese concentration required for activation of efflux is higher than that for repression of uptake. In Bacillus subtilis (strain 168), this protein is HTH-type transcriptional regulator MntR.